A 425-amino-acid polypeptide reads, in one-letter code: Ribosomal protein uS12 methylthiotransferase RimO (425 aa).

The MTTase N-terminal domain occupies Lys2–Lys115. Residues Cys11, Cys47, Cys78, Cys142, Cys146, and Cys149 each coordinate [4Fe-4S] cluster. Residues Val128–Glu357 enclose the Radical SAM core domain. The region spanning Arg360–Val425 is the TRAM domain.

Belongs to the methylthiotransferase family. RimO subfamily. [4Fe-4S] cluster serves as cofactor.

It is found in the cytoplasm. It carries out the reaction L-aspartate(89)-[ribosomal protein uS12]-hydrogen + (sulfur carrier)-SH + AH2 + 2 S-adenosyl-L-methionine = 3-methylsulfanyl-L-aspartate(89)-[ribosomal protein uS12]-hydrogen + (sulfur carrier)-H + 5'-deoxyadenosine + L-methionine + A + S-adenosyl-L-homocysteine + 2 H(+). Catalyzes the methylthiolation of an aspartic acid residue of ribosomal protein uS12. The chain is Ribosomal protein uS12 methylthiotransferase RimO from Thermodesulfovibrio yellowstonii (strain ATCC 51303 / DSM 11347 / YP87).